A 1243-amino-acid chain; its full sequence is ATP-dependent helicase/nuclease subunit A (1243 aa).

One can recognise a UvrD-like helicase ATP-binding domain in the interval 2 to 475 (VNWTKEQEEA…IDLARNFRSR (474 aa)). 23-30 (AAAGSGKT) lines the ATP pocket. The UvrD-like helicase C-terminal domain maps to 502–803 (AAELIYGNKM…RIMTIHKSKG (302 aa)).

It belongs to the helicase family. AddA subfamily. Heterodimer of AddA and AddB/RexB. Mg(2+) is required as a cofactor.

It catalyses the reaction Couples ATP hydrolysis with the unwinding of duplex DNA by translocating in the 3'-5' direction.. It carries out the reaction ATP + H2O = ADP + phosphate + H(+). The heterodimer acts as both an ATP-dependent DNA helicase and an ATP-dependent, dual-direction single-stranded exonuclease. Recognizes the chi site generating a DNA molecule suitable for the initiation of homologous recombination. The AddA nuclease domain is required for chi fragment generation; this subunit has the helicase and 3' -&gt; 5' nuclease activities. This chain is ATP-dependent helicase/nuclease subunit A, found in Oceanobacillus iheyensis (strain DSM 14371 / CIP 107618 / JCM 11309 / KCTC 3954 / HTE831).